Reading from the N-terminus, the 192-residue chain is Large ribosomal subunit protein bL25 (192 aa).

Belongs to the bacterial ribosomal protein bL25 family. CTC subfamily. In terms of assembly, part of the 50S ribosomal subunit; part of the 5S rRNA/L5/L18/L25 subcomplex. Contacts the 5S rRNA. Binds to the 5S rRNA independently of L5 and L18.

In terms of biological role, this is one of the proteins that binds to the 5S RNA in the ribosome where it forms part of the central protuberance. In Solidesulfovibrio magneticus (strain ATCC 700980 / DSM 13731 / RS-1) (Desulfovibrio magneticus), this protein is Large ribosomal subunit protein bL25.